The chain runs to 630 residues: 1-deoxy-D-xylulose-5-phosphate synthase (630 aa).

Residues His-72 and 113–115 (GHS) contribute to the thiamine diphosphate site. Asp-144 provides a ligand contact to Mg(2+). Thiamine diphosphate contacts are provided by residues 145–146 (GA), Asn-173, Tyr-284, and Glu-367. Asn-173 contributes to the Mg(2+) binding site.

The protein belongs to the transketolase family. DXPS subfamily. Homodimer. Mg(2+) is required as a cofactor. Requires thiamine diphosphate as cofactor.

It catalyses the reaction D-glyceraldehyde 3-phosphate + pyruvate + H(+) = 1-deoxy-D-xylulose 5-phosphate + CO2. It functions in the pathway metabolic intermediate biosynthesis; 1-deoxy-D-xylulose 5-phosphate biosynthesis; 1-deoxy-D-xylulose 5-phosphate from D-glyceraldehyde 3-phosphate and pyruvate: step 1/1. In terms of biological role, catalyzes the acyloin condensation reaction between C atoms 2 and 3 of pyruvate and glyceraldehyde 3-phosphate to yield 1-deoxy-D-xylulose-5-phosphate (DXP). This is 1-deoxy-D-xylulose-5-phosphate synthase from Bacillus cereus (strain G9842).